Reading from the N-terminus, the 488-residue chain is Malonate-semialdehyde dehydrogenase (488 aa).

7 residues coordinate NAD(+): Ala-150, Phe-152, Lys-176, Glu-179, Arg-180, Ser-229, and Thr-251. The Nucleophile role is filled by Cys-284. Glu-382 serves as a coordination point for NAD(+).

Belongs to the aldehyde dehydrogenase family. IolA subfamily. As to quaternary structure, homotetramer.

It carries out the reaction 3-oxopropanoate + NAD(+) + CoA + H2O = hydrogencarbonate + acetyl-CoA + NADH + H(+). The enzyme catalyses 2-methyl-3-oxopropanoate + NAD(+) + CoA + H2O = propanoyl-CoA + hydrogencarbonate + NADH + H(+). It functions in the pathway polyol metabolism; myo-inositol degradation into acetyl-CoA; acetyl-CoA from myo-inositol: step 7/7. Catalyzes the oxidation of malonate semialdehyde (MSA) and methylmalonate semialdehyde (MMSA) into acetyl-CoA and propanoyl-CoA, respectively. Is involved in a myo-inositol catabolic pathway. Bicarbonate, and not CO2, is the end-product of the enzymatic reaction. This chain is Malonate-semialdehyde dehydrogenase, found in Listeria monocytogenes serotype 4b (strain CLIP80459).